The primary structure comprises 310 residues: L-lactate dehydrogenase (310 aa).

NAD(+) contacts are provided by residues Val11, Asp32, Tyr62, and 76-77 (GV). Residues Gln79, Arg85, and 117–120 (NPVD) each bind substrate. NAD(+) contacts are provided by residues 115–117 (ATN) and Ser140. A substrate-binding site is contributed by 145-148 (DTAR). Beta-D-fructose 1,6-bisphosphate-binding residues include Arg150 and His165. The active-site Proton acceptor is the His172. Tyr218 is modified (phosphotyrosine). Thr227 lines the substrate pocket.

The protein belongs to the LDH/MDH superfamily. LDH family. As to quaternary structure, homotetramer.

Its subcellular location is the cytoplasm. The catalysed reaction is (S)-lactate + NAD(+) = pyruvate + NADH + H(+). It participates in fermentation; pyruvate fermentation to lactate; (S)-lactate from pyruvate: step 1/1. Allosterically activated by fructose 1,6-bisphosphate (FBP). Its function is as follows. Catalyzes the conversion of lactate to pyruvate. The polypeptide is L-lactate dehydrogenase (Thermus thermophilus (strain ATCC BAA-163 / DSM 7039 / HB27)).